The following is a 689-amino-acid chain: 1,4-alpha-glucan-branching enzyme (689 aa).

2 residues coordinate (1,4-alpha-D-glucosyl)n: tryptophan 93 and lysine 128. Residue aspartate 345 is the Nucleophile of the active site. Glutamate 400 serves as the catalytic Proton donor.

Belongs to the glycosyl hydrolase 13 family. GlgB subfamily.

The protein localises to the cytoplasm. It catalyses the reaction Transfers a segment of a (1-&gt;4)-alpha-D-glucan chain to a primary hydroxy group in a similar glucan chain.. Its pathway is glycan biosynthesis; glycogen biosynthesis. Glycogen-branching enzyme participates in the glycogen biosynthetic process along with glycogenin and glycogen synthase. Generates alpha-1,6-glucosidic branches from alpha-1,4-linked glucose chains, to increase solubility of the glycogen polymer. The sequence is that of 1,4-alpha-glucan-branching enzyme (gbeA) from Aspergillus oryzae (strain ATCC 42149 / RIB 40) (Yellow koji mold).